The chain runs to 209 residues: Thymidylate kinase (209 aa).

Residue 10–17 participates in ATP binding; the sequence is GLDGAGKS.

Belongs to the thymidylate kinase family.

The enzyme catalyses dTMP + ATP = dTDP + ADP. Functionally, phosphorylation of dTMP to form dTDP in both de novo and salvage pathways of dTTP synthesis. The sequence is that of Thymidylate kinase from Francisella tularensis subsp. holarctica (strain FTNF002-00 / FTA).